Here is a 690-residue protein sequence, read N- to C-terminus: SWI/SNF-related matrix-associated actin-dependent regulator of chromatin subfamily A-like protein 1 homolog (690 aa).

Positions 30-49 (MQAAANATASTSSAAPPAPP) are disordered. The segment covering 31-44 (QAAANATASTSSAA) has biased composition (low complexity). Positions 92 to 170 (PTSLIKPTIG…AVKVELEPLP (79 aa)) constitute an HARP domain. Positions 209–367 (IFALERDGRI…FTQIRLIDHK (159 aa)) constitute a Helicase ATP-binding domain. 222-229 (DEMGLGKS) contributes to the ATP binding site. A DESH box motif is present at residues 316 to 319 (DESH). The Nuclear localization signal motif lies at 411 to 428 (RRLKADVLKDLPEKRREV). The region spanning 482–639 (ILENYFYPDA…TFRTADKMHL (158 aa)) is the Helicase C-terminal domain.

Belongs to the SNF2/RAD54 helicase family. SMARCAL1 subfamily.

The protein localises to the nucleus. The enzyme catalyses ATP + H2O = ADP + phosphate + H(+). ATP-dependent annealing helicase that catalyzes the rewinding of the stably unwound DNA. The chain is SWI/SNF-related matrix-associated actin-dependent regulator of chromatin subfamily A-like protein 1 homolog from Caenorhabditis elegans.